The sequence spans 369 residues: Anhydro-N-acetylmuramic acid kinase (369 aa).

Residue 12–19 participates in ATP binding; it reads GTSMDGVD.

Belongs to the anhydro-N-acetylmuramic acid kinase family.

It catalyses the reaction 1,6-anhydro-N-acetyl-beta-muramate + ATP + H2O = N-acetyl-D-muramate 6-phosphate + ADP + H(+). It functions in the pathway amino-sugar metabolism; 1,6-anhydro-N-acetylmuramate degradation. The protein operates within cell wall biogenesis; peptidoglycan recycling. In terms of biological role, catalyzes the specific phosphorylation of 1,6-anhydro-N-acetylmuramic acid (anhMurNAc) with the simultaneous cleavage of the 1,6-anhydro ring, generating MurNAc-6-P. Is required for the utilization of anhMurNAc either imported from the medium or derived from its own cell wall murein, and thus plays a role in cell wall recycling. In Shewanella baltica (strain OS155 / ATCC BAA-1091), this protein is Anhydro-N-acetylmuramic acid kinase.